The sequence spans 411 residues: Na(+)-translocating NADH-quinone reductase subunit F (411 aa).

A helical membrane pass occupies residues valine 5–isoleucine 25. In terms of domain architecture, 2Fe-2S ferredoxin-type spans glycine 36–isoleucine 130. Residues cysteine 73, cysteine 79, cysteine 82, and cysteine 114 each coordinate [2Fe-2S] cluster. Residues valine 133–lysine 273 enclose the FAD-binding FR-type domain.

It belongs to the NqrF family. As to quaternary structure, composed of six subunits; NqrA, NqrB, NqrC, NqrD, NqrE and NqrF. [2Fe-2S] cluster serves as cofactor. FAD is required as a cofactor.

The protein localises to the cell inner membrane. The enzyme catalyses a ubiquinone + n Na(+)(in) + NADH + H(+) = a ubiquinol + n Na(+)(out) + NAD(+). Its function is as follows. NQR complex catalyzes the reduction of ubiquinone-1 to ubiquinol by two successive reactions, coupled with the transport of Na(+) ions from the cytoplasm to the periplasm. The first step is catalyzed by NqrF, which accepts electrons from NADH and reduces ubiquinone-1 to ubisemiquinone by a one-electron transfer pathway. This chain is Na(+)-translocating NADH-quinone reductase subunit F, found in Haemophilus influenzae (strain PittGG).